We begin with the raw amino-acid sequence, 539 residues long: Probable quinate permease (539 aa).

Over 1–22 (MSILSMVEDRPTPKEVYNWRIY) the chain is Cytoplasmic. A helical membrane pass occupies residues 23–43 (LLAAVASFTSCMIGYDSAFIG). Over 44–74 (TTISLDSFKNEFHWDSMSTAKQNLVSANIVS) the chain is Extracellular. A helical membrane pass occupies residues 75–95 (CYQAGAFFGAFFAYPIGHFWG). At 96-97 (RK) the chain is on the cytoplasmic side. The helical transmembrane segment at 98–118 (WGLMLSALVFTLGAGLMLGAN) threads the bilayer. The Extracellular portion of the chain corresponds to 119-130 (GDRGLGLIYGGR). The chain crosses the membrane as a helical span at residues 131–151 (VLAGLGVGAGSNFTPIYISEL). Residues 152-159 (APPAIRGR) lie on the Cytoplasmic side of the membrane. The chain crosses the membrane as a helical span at residues 160 to 180 (LVGVYELGWQVGGLVGFWINY). Topologically, residues 181-193 (GVEQTMAPSHKQW) are extracellular. Residues 194-214 (LIPFAVQLIPAGLLIIGILFV) traverse the membrane as a helical segment. Over 215–285 (KESPRWLFLR…AWTNKRILYR (71 aa)) the chain is Cytoplasmic. A helical transmembrane segment spans residues 286–306 (LFLGSMLFFWQNGSGINAINY). The Extracellular segment spans residues 307 to 325 (YSPTVFKSIGLKGNSSSLL). The helical transmembrane segment at 326-346 (TTGIFGVVKTVVTIVWLLYLI) threads the bilayer. Over 347–352 (DHVGRR) the chain is Cytoplasmic. Residues 353–373 (LLLLIGAAGGSICMWIVGAYI) form a helical membrane-spanning segment. Topologically, residues 374–387 (KVVDPTHNQSDHLN) are extracellular. The chain crosses the membrane as a helical span at residues 388 to 408 (GGGVAAIFFFYLWTAFYTPSW). The Cytoplasmic portion of the chain corresponds to 409 to 456 (NGTPWVINSEMFDPNIRSLAQACAAGSNWLWNFLISRFTPQMFAKMDY). The chain crosses the membrane as a helical span at residues 457 to 477 (GVYFFFASLMLLSIPFVFFLV). Topologically, residues 478 to 539 (PETKGIPLEN…EQVEDTDRKE (62 aa)) are extracellular.

The protein belongs to the major facilitator superfamily. Sugar transporter (TC 2.A.1.1) family. As to quaternary structure, interacts with creB. Ubiquitinated. Deubiquitinated by creB, probably to control its activity or amount.

It is found in the cell membrane. In terms of biological role, integral membrane transporter that imports quinic acid to be catabolized as a carbon source. The polypeptide is Probable quinate permease (qutD) (Aspergillus niger (strain ATCC MYA-4892 / CBS 513.88 / FGSC A1513)).